Here is a 150-residue protein sequence, read N- to C-terminus: Flagellar assembly factor FliW (150 aa).

It belongs to the FliW family. In terms of assembly, interacts with translational regulator CsrA and flagellin(s).

It is found in the cytoplasm. In terms of biological role, acts as an anti-CsrA protein, binds CsrA and prevents it from repressing translation of its target genes, one of which is flagellin. Binds to flagellin and participates in the assembly of the flagellum. This Thermoanaerobacter pseudethanolicus (strain ATCC 33223 / 39E) (Clostridium thermohydrosulfuricum) protein is Flagellar assembly factor FliW.